Here is a 31-residue protein sequence, read N- to C-terminus: Antifungal protein 1 (31 aa).

Basic and acidic residues-rich tracts occupy residues 1 to 10 and 18 to 31; these read PGAGSQEERM and DFSH…MVRE. Positions 1-31 are disordered; sequence PGAGSQEERMQGQMEGQDFSHEERFLSMVRE.

In terms of assembly, heterodimer; disulfide-linked. In terms of processing, disulfide bonds.

Its function is as follows. Has antifungal activity against C.gloeosporioides but not against B.cinerea and Fusarium sp. or against various yeasts. Has no antibacterial activity. This is Antifungal protein 1 from Passiflora alata (Winged-stem passion flower).